The sequence spans 379 residues: Cytochrome b (379 aa).

The next 4 helical transmembrane spans lie at 33–53 (FGSL…FLAM), 77–98 (WLIR…FIHV), 113–133 (WNIG…GYVL), and 178–198 (FFAF…VHLL). Positions 83 and 97 each coordinate heme b. Residues His182 and His196 each coordinate heme b. His201 provides a ligand contact to a ubiquinone. Transmembrane regions (helical) follow at residues 226–246 (IKDL…ALFF), 288–308 (LGGV…PLLN), 320–340 (VTQT…WIGG), and 347–367 (FTMI…ILIP).

This sequence belongs to the cytochrome b family. The cytochrome bc1 complex contains 11 subunits: 3 respiratory subunits (MT-CYB, CYC1 and UQCRFS1), 2 core proteins (UQCRC1 and UQCRC2) and 6 low-molecular weight proteins (UQCRH/QCR6, UQCRB/QCR7, UQCRQ/QCR8, UQCR10/QCR9, UQCR11/QCR10 and a cleavage product of UQCRFS1). This cytochrome bc1 complex then forms a dimer. The cofactor is heme b.

It localises to the mitochondrion inner membrane. Functionally, component of the ubiquinol-cytochrome c reductase complex (complex III or cytochrome b-c1 complex) that is part of the mitochondrial respiratory chain. The b-c1 complex mediates electron transfer from ubiquinol to cytochrome c. Contributes to the generation of a proton gradient across the mitochondrial membrane that is then used for ATP synthesis. The chain is Cytochrome b (MT-CYB) from Akodon philipmyersi (Myers' grass mouse).